Here is a 253-residue protein sequence, read N- to C-terminus: MGELPGSEGMWENCPLGWVKKKASGTLAPLDFLLQRKRLWLWASEPVRPQPQGIHRFREARRQFCRMRGSRLTGGRKGFGSSGLRFGRGGFSEEVMPQPVLKAMRCAEGAWWFSPDGPAGSAASIWPAEGAEGLPGQLGRDRLEVVYSVPDNVPGQNGSRRPLVCKITGKCLSVCSEENAKAGGCSAFPLLLSQLGARMTGREHAHKGPELTTPDSGLPRPPNPALAGFRALAQHSPPLGTSTPSAVLLSAAT.

Residues 200 to 209 (TGREHAHKGP) show a composition bias toward basic and acidic residues. Disordered stretches follow at residues 200-225 (TGREHAHKGPELTTPDSGLPRPPNPA) and 234-253 (QHSPPLGTSTPSAVLLSAAT).

Most abundantly expressed in gastrointestinal tissues. Expressed at lower levels in kidney and placenta. Expressed in fetal brain, liver, placenta, kidney and lung.

This is an uncharacterized protein from Homo sapiens (Human).